A 146-amino-acid chain; its full sequence is Small ribosomal subunit protein uS9 (146 aa).

Ser3 is modified (phosphoserine). An N6-acetyllysine modification is found at Lys60.

This sequence belongs to the universal ribosomal protein uS9 family. As to quaternary structure, component of the small ribosomal subunit. Part of the small subunit (SSU) processome, composed of more than 70 proteins and the RNA chaperone small nucleolar RNA (snoRNA) U3.

It is found in the cytoplasm. The protein resides in the nucleus. The protein localises to the nucleolus. Functionally, component of the small ribosomal subunit. The ribosome is a large ribonucleoprotein complex responsible for the synthesis of proteins in the cell. Part of the small subunit (SSU) processome, first precursor of the small eukaryotic ribosomal subunit. During the assembly of the SSU processome in the nucleolus, many ribosome biogenesis factors, an RNA chaperone and ribosomal proteins associate with the nascent pre-rRNA and work in concert to generate RNA folding, modifications, rearrangements and cleavage as well as targeted degradation of pre-ribosomal RNA by the RNA exosome. This chain is Small ribosomal subunit protein uS9 (RPS16), found in Bos taurus (Bovine).